A 1050-amino-acid chain; its full sequence is DNA ligase 4 (1050 aa).

Positions 1–22 are disordered; the sequence is MNTNRRSRSPDEEALEEDQHQY. Residues Glu-329, Lys-331, Leu-332, Arg-336, Glu-398, Phe-438, Glu-498, Lys-503, Lys-520, and Lys-522 each contribute to the ATP site. Residue Lys-331 is the N6-AMP-lysine intermediate of the active site. Position 398 (Glu-398) interacts with Mg(2+). Residue Glu-498 participates in Mg(2+) binding. The span at 691 to 702 shows a compositional bias: basic and acidic residues; the sequence is QEQERKKMEMEN. The tract at residues 691-711 is disordered; the sequence is QEQERKKMEMENRKRKPATKR. BRCT domains lie at 742 to 840 and 936 to 1049; these read ASKR…KENK and LRSF…EYVA.

The protein belongs to the ATP-dependent DNA ligase family. Mg(2+) serves as cofactor.

The protein resides in the nucleus. The enzyme catalyses ATP + (deoxyribonucleotide)n-3'-hydroxyl + 5'-phospho-(deoxyribonucleotide)m = (deoxyribonucleotide)n+m + AMP + diphosphate.. DNA ligase involved in DNA non-homologous end joining (NHEJ); required for double-strand break (DSB) repair. The chain is DNA ligase 4 (mus-53) from Neurospora crassa (strain ATCC 24698 / 74-OR23-1A / CBS 708.71 / DSM 1257 / FGSC 987).